The chain runs to 151 residues: Large ribosomal subunit protein bL9 (151 aa).

The protein belongs to the bacterial ribosomal protein bL9 family.

In terms of biological role, binds to the 23S rRNA. The chain is Large ribosomal subunit protein bL9 from Desulforapulum autotrophicum (strain ATCC 43914 / DSM 3382 / VKM B-1955 / HRM2) (Desulfobacterium autotrophicum).